Here is a 557-residue protein sequence, read N- to C-terminus: Dihydroxy-acid dehydratase (557 aa).

D78 contributes to the Mg(2+) binding site. Residue C119 participates in [2Fe-2S] cluster binding. Positions 120 and 121 each coordinate Mg(2+). Residue K121 is modified to N6-carboxylysine. Residue C192 participates in [2Fe-2S] cluster binding. E442 is a binding site for Mg(2+). The active-site Proton acceptor is S468.

It belongs to the IlvD/Edd family. Homodimer. It depends on [2Fe-2S] cluster as a cofactor. Mg(2+) is required as a cofactor.

It carries out the reaction (2R)-2,3-dihydroxy-3-methylbutanoate = 3-methyl-2-oxobutanoate + H2O. It catalyses the reaction (2R,3R)-2,3-dihydroxy-3-methylpentanoate = (S)-3-methyl-2-oxopentanoate + H2O. It functions in the pathway amino-acid biosynthesis; L-isoleucine biosynthesis; L-isoleucine from 2-oxobutanoate: step 3/4. The protein operates within amino-acid biosynthesis; L-valine biosynthesis; L-valine from pyruvate: step 3/4. Functions in the biosynthesis of branched-chain amino acids. Catalyzes the dehydration of (2R,3R)-2,3-dihydroxy-3-methylpentanoate (2,3-dihydroxy-3-methylvalerate) into 2-oxo-3-methylpentanoate (2-oxo-3-methylvalerate) and of (2R)-2,3-dihydroxy-3-methylbutanoate (2,3-dihydroxyisovalerate) into 2-oxo-3-methylbutanoate (2-oxoisovalerate), the penultimate precursor to L-isoleucine and L-valine, respectively. This Bacillus cereus (strain G9842) protein is Dihydroxy-acid dehydratase.